A 248-amino-acid polypeptide reads, in one-letter code: Pulmonary surfactant-associated protein A (248 aa).

A signal peptide spans 1–20 (MLLCSLTLTLILLAVSGTKC). In terms of domain architecture, Collagen-like spans 31 to 100 (GVPGIPGSPG…PGERGPPGPP (70 aa)). The tract at residues 34 to 105 (GIPGSPGLPG…PPGPPAYPDE (72 aa)) is disordered. A compositionally biased stretch (pro residues) spans 54–65 (PGPPGPIGPPGG). Residues 84–93 (ERGDKGEPGE) are compositionally biased toward basic and acidic residues. The region spanning 134 to 247 (VGEKVFSTNG…CLQYRLAICE (114 aa)) is the C-type lectin domain. 2 cysteine pairs are disulfide-bonded: C155–C246 and C224–C238. N-linked (GlcNAc...) asparagine glycosylation occurs at N207. The Ca(2+) site is built by E215, R217, N234, and D235.

Belongs to the SFTPA family. Oligomeric complex of 6 set of homotrimers.

The protein resides in the secreted. It localises to the extracellular space. It is found in the extracellular matrix. The protein localises to the surface film. Its function is as follows. In presence of calcium ions, it binds to surfactant phospholipids and contributes to lower the surface tension at the air-liquid interface in the alveoli of the mammalian lung and is essential for normal respiration. Enhances the expression of MYO18A/SP-R210 on alveolar macrophages. The polypeptide is Pulmonary surfactant-associated protein A (SFTPA1) (Equus caballus (Horse)).